A 318-amino-acid polypeptide reads, in one-letter code: Beta-ketoacyl-[acyl-carrier-protein] synthase III (318 aa).

Residues C113 and H245 contribute to the active site. The tract at residues 246-250 (QANIR) is ACP-binding. Residue N275 is part of the active site.

Belongs to the thiolase-like superfamily. FabH family. In terms of assembly, homodimer.

The protein resides in the cytoplasm. It carries out the reaction malonyl-[ACP] + acetyl-CoA + H(+) = 3-oxobutanoyl-[ACP] + CO2 + CoA. It functions in the pathway lipid metabolism; fatty acid biosynthesis. Its function is as follows. Catalyzes the condensation reaction of fatty acid synthesis by the addition to an acyl acceptor of two carbons from malonyl-ACP. Catalyzes the first condensation reaction which initiates fatty acid synthesis and may therefore play a role in governing the total rate of fatty acid production. Possesses both acetoacetyl-ACP synthase and acetyl transacylase activities. Its substrate specificity determines the biosynthesis of branched-chain and/or straight-chain of fatty acids. This is Beta-ketoacyl-[acyl-carrier-protein] synthase III from Wolbachia pipientis subsp. Culex pipiens (strain wPip).